The following is a 156-amino-acid chain: Arginine repressor (156 aa).

The protein belongs to the ArgR family.

The protein resides in the cytoplasm. It functions in the pathway amino-acid biosynthesis; L-arginine biosynthesis [regulation]. Regulates arginine biosynthesis genes. This Shewanella pealeana (strain ATCC 700345 / ANG-SQ1) protein is Arginine repressor.